The sequence spans 239 residues: Tryptophan synthase alpha chain (239 aa).

Residues Glu-34 and Asp-45 each act as proton acceptor in the active site.

The protein belongs to the TrpA family. In terms of assembly, tetramer of two alpha and two beta chains.

The catalysed reaction is (1S,2R)-1-C-(indol-3-yl)glycerol 3-phosphate + L-serine = D-glyceraldehyde 3-phosphate + L-tryptophan + H2O. Its pathway is amino-acid biosynthesis; L-tryptophan biosynthesis; L-tryptophan from chorismate: step 5/5. In terms of biological role, the alpha subunit is responsible for the aldol cleavage of indoleglycerol phosphate to indole and glyceraldehyde 3-phosphate. The chain is Tryptophan synthase alpha chain from Thermotoga petrophila (strain ATCC BAA-488 / DSM 13995 / JCM 10881 / RKU-1).